The primary structure comprises 193 residues: dCTP deaminase (193 aa).

DCTP contacts are provided by residues 110–115, D128, 136–138, Y171, K178, and Q182; these read RSSLAR and VLE. E138 serves as the catalytic Proton donor/acceptor. The interval 169–193 is disordered; the sequence is RPYNSRQDAKYRDQQGAVASRIDKD.

Belongs to the dCTP deaminase family. Homotrimer.

It carries out the reaction dCTP + H2O + H(+) = dUTP + NH4(+). Its pathway is pyrimidine metabolism; dUMP biosynthesis; dUMP from dCTP (dUTP route): step 1/2. Catalyzes the deamination of dCTP to dUTP. The sequence is that of dCTP deaminase from Serratia proteamaculans (strain 568).